Here is a 218-residue protein sequence, read N- to C-terminus: Capsid protein (218 aa).

N-acetylmethionine; by host is present on M1. Residues 1 to 10 are compositionally biased toward low complexity; the sequence is MDKSESTSAG. The tract at residues 1-30 is disordered; sequence MDKSESTSAGRNRRRRPRRGSRSASSSSDA. A compositionally biased stretch (basic residues) spans 11 to 21; sequence RNRRRRPRRGS.

It belongs to the cucumovirus capsid protein family.

It localises to the virion. Capsid protein. Probably binds RNA and plays a role in packaging. The chain is Capsid protein from Cucumis sativus (Cucumber).